Consider the following 1360-residue polypeptide: DNA-directed RNA polymerase subunit beta (1360 aa).

The protein belongs to the RNA polymerase beta chain family. As to quaternary structure, the RNAP catalytic core consists of 2 alpha, 1 beta, 1 beta' and 1 omega subunit. When a sigma factor is associated with the core the holoenzyme is formed, which can initiate transcription.

It catalyses the reaction RNA(n) + a ribonucleoside 5'-triphosphate = RNA(n+1) + diphosphate. Functionally, DNA-dependent RNA polymerase catalyzes the transcription of DNA into RNA using the four ribonucleoside triphosphates as substrates. This Caulobacter sp. (strain K31) protein is DNA-directed RNA polymerase subunit beta.